The primary structure comprises 60 residues: Large ribosomal subunit protein uL30 (60 aa).

This sequence belongs to the universal ribosomal protein uL30 family. Part of the 50S ribosomal subunit.

This chain is Large ribosomal subunit protein uL30, found in Kineococcus radiotolerans (strain ATCC BAA-149 / DSM 14245 / SRS30216).